Here is a 601-residue protein sequence, read N- to C-terminus: MTSQSIMLLVAFLGVLLALAYPLGLFMAKVGDGTAIRGLGWLLKMENALYRLAGLDTQSAMSWKSYAIALLVFNTLGALFVYAVQRLQAWLPLNPQAFGNVSPDSSFNTAVSFVSNTNWQGYGGESTMSYLTQMLALTGQNFFSAATGIAVAFALIRGFSSRSAKSIGNFWVDLTRSTLYILLPLAIVVSVALMGQGVIQNFSAYQDVALVDPVTYQQAKTTADGQPVVDAEGKPVMETLTAKMQTIAMGPVASQEAIKMLGTNGGGFFNANSAHPYENPTVFSNFIEMLAIFLIPAGLCFTFGRMVGDMRQGWAVLGAMTLIFVVMTSIVMTSEQSAHPAMQALGVDQTTTALQSGGNMEGKETRFGISASALFTAVTTAASCGAVNNMHDSLMPMGGFVPLVLMQFGEVVFGGVGTGLYGMLIFAILSVFIAGLMIGRTPEYLGKKIQSYEMKMASIAILVTPTLVLVGTAIAVLVESGKVGIANPGAHGFSEILYAFTSAANNNGSAFAGLSANTPFYNTMLAIAMWFGRFAMIVPILAIAGSLACKQRLAANAGTMPTHGPLFVALLVGVVVLVGVLNYVPALALGPIVEHLQLFSH.

Helical transmembrane passes span 6 to 26, 65 to 85, 136 to 156, 179 to 199, 283 to 303, 313 to 333, 367 to 387, 397 to 417, 419 to 439, 458 to 478, 524 to 544, and 566 to 586; these read IMLL…LGLF, SYAI…YAVQ, ALTG…FALI, LYIL…QGVI, FSNF…CFTF, GWAV…IVMT, FGIS…CGAV, MGGF…GGVG, GLYG…LMIG, SIAI…AVLV, MLAI…LAIA, and LFVA…YVPA.

It belongs to the KdpA family. In terms of assembly, the system is composed of three essential subunits: KdpA, KdpB and KdpC.

The protein resides in the cell inner membrane. Its function is as follows. Part of the high-affinity ATP-driven potassium transport (or Kdp) system, which catalyzes the hydrolysis of ATP coupled with the electrogenic transport of potassium into the cytoplasm. This subunit binds the periplasmic potassium ions and delivers the ions to the membrane domain of KdpB through an intramembrane tunnel. The polypeptide is Potassium-transporting ATPase potassium-binding subunit (Herminiimonas arsenicoxydans).